A 365-amino-acid polypeptide reads, in one-letter code: Putative carbonic anhydrase-like protein 1 (365 aa).

Positions 1-25 (MRFECSHFPLFLIILTCHISPLKSS) are cleaved as a signal peptide. The region spanning 28–356 (YQWSYDSDVF…TNNRLVRTNI (329 aa)) is the Alpha-carbonic anhydrase domain. Tyrosine 223 is a catalytic residue. Substrate contacts are provided by residues threonine 295 and 295 to 296 (TS).

The protein belongs to the alpha-carbonic anhydrase family.

The protein localises to the secreted. The polypeptide is Putative carbonic anhydrase-like protein 1 (cah-1) (Caenorhabditis elegans).